The sequence spans 352 residues: Photosystem II D2 protein (352 aa).

A helical transmembrane segment spans residues C40–T60. Position 117 (H117) interacts with chlorophyll a. The helical transmembrane segment at G124 to P140 threads the bilayer. Pheophytin a-binding residues include Q129 and N142. Residues V152–S165 traverse the membrane as a helical segment. Position 197 (H197) interacts with chlorophyll a. The chain crosses the membrane as a helical span at residues G207 to E227. The a plastoquinone site is built by H214 and F261. H214 contributes to the Fe cation binding site. Residue H268 coordinates Fe cation. Residues G278–R294 form a helical membrane-spanning segment.

The protein belongs to the reaction center PufL/M/PsbA/D family. As to quaternary structure, PSII is composed of 1 copy each of membrane proteins PsbA, PsbB, PsbC, PsbD, PsbE, PsbF, PsbH, PsbI, PsbJ, PsbK, PsbL, PsbM, PsbT, PsbX, PsbY, PsbZ, Psb30/Ycf12, peripheral proteins PsbO, CyanoQ (PsbQ), PsbU, PsbV and a large number of cofactors. It forms dimeric complexes. The D1/D2 heterodimer binds P680, chlorophylls that are the primary electron donor of PSII, and subsequent electron acceptors. It shares a non-heme iron and each subunit binds pheophytin, quinone, additional chlorophylls, carotenoids and lipids. There is also a Cl(-1) ion associated with D1 and D2, which is required for oxygen evolution. The PSII complex binds additional chlorophylls, carotenoids and specific lipids. serves as cofactor.

Its subcellular location is the cellular thylakoid membrane. It carries out the reaction 2 a plastoquinone + 4 hnu + 2 H2O = 2 a plastoquinol + O2. Photosystem II (PSII) is a light-driven water:plastoquinone oxidoreductase that uses light energy to abstract electrons from H(2)O, generating O(2) and a proton gradient subsequently used for ATP formation. It consists of a core antenna complex that captures photons, and an electron transfer chain that converts photonic excitation into a charge separation. The D1/D2 (PsbA/PsbD) reaction center heterodimer binds P680, the primary electron donor of PSII as well as several subsequent electron acceptors. D2 is needed for assembly of a stable PSII complex. This is Photosystem II D2 protein from Synechococcus sp. (strain JA-3-3Ab) (Cyanobacteria bacterium Yellowstone A-Prime).